Consider the following 553-residue polypeptide: Membrane protein insertase YidC (553 aa).

Transmembrane regions (helical) follow at residues Val-7–Gln-24, Trp-365–Ala-385, Leu-435–Val-455, Pro-474–Pro-494, and Pro-509–Val-529.

The protein belongs to the OXA1/ALB3/YidC family. Type 1 subfamily. As to quaternary structure, interacts with the Sec translocase complex via SecD. Specifically interacts with transmembrane segments of nascent integral membrane proteins during membrane integration.

The protein resides in the cell inner membrane. Functionally, required for the insertion and/or proper folding and/or complex formation of integral membrane proteins into the membrane. Involved in integration of membrane proteins that insert both dependently and independently of the Sec translocase complex, as well as at least some lipoproteins. Aids folding of multispanning membrane proteins. This is Membrane protein insertase YidC from Burkholderia orbicola (strain MC0-3).